The primary structure comprises 94 residues: MFTINAEVRKEQGKGASRRLRAANKFPAIIYGGKEAPLAIELDHDKVMNMQAKAEFYSEVLAIVVDGKEIKVKAQDVQRHPYKPKLQHIDFVRA.

It belongs to the bacterial ribosomal protein bL25 family. In terms of assembly, part of the 50S ribosomal subunit; part of the 5S rRNA/L5/L18/L25 subcomplex. Contacts the 5S rRNA. Binds to the 5S rRNA independently of L5 and L18.

Functionally, this is one of the proteins that binds to the 5S RNA in the ribosome where it forms part of the central protuberance. The protein is Large ribosomal subunit protein bL25 of Shigella boydii serotype 4 (strain Sb227).